The primary structure comprises 59 residues: Large ribosomal subunit protein uL30 (59 aa).

The protein belongs to the universal ribosomal protein uL30 family. Part of the 50S ribosomal subunit.

The polypeptide is Large ribosomal subunit protein uL30 (Yersinia pseudotuberculosis serotype I (strain IP32953)).